Consider the following 285-residue polypeptide: 2,4-didehydro-3-deoxy-L-rhamnonate hydrolase (285 aa).

Leucine 73 is a binding site for pyruvate. 3 residues coordinate Mg(2+): glutamate 119, glutamate 121, and aspartate 150. The pyruvate site is built by lysine 168 and threonine 238.

This sequence belongs to the FAH family. In terms of assembly, homodimer. Mg(2+) is required as a cofactor.

The catalysed reaction is 2,4-didehydro-3-deoxy-L-rhamnonate + H2O = (S)-lactate + pyruvate + H(+). It participates in carbohydrate degradation; L-rhamnose degradation. Its function is as follows. Hydrolase that catalyzes the hydrolysis of 2,4-didehydro-3-deoxy-L-rhamnonate to pyruvate and L-lactate. Can also hydrolyze L-2,4-diketo-3-deoxylyxonate and L-2,4-diketo-3-deoxymannonate. In vitro can also use acylpyruvates such as acetylpyruvate and trimethylacetopyruvate. Catalyzes the fifth (last) step in an alternative pathway for rhamnose utilization that does not involve phosphorylated intermediates. The protein is 2,4-didehydro-3-deoxy-L-rhamnonate hydrolase of Sphingomonas sp. (strain SKA58).